A 929-amino-acid polypeptide reads, in one-letter code: Valine--tRNA ligase (929 aa).

Positions 59–69 (PNVTGSLHMGH) match the 'HIGH' region motif. The short motif at 557–561 (KMSKS) is the 'KMSKS' region element. Lysine 560 lines the ATP pocket. Residues 862–929 (LVDLDALRGR…LARQRLSDLG (68 aa)) adopt a coiled-coil conformation.

This sequence belongs to the class-I aminoacyl-tRNA synthetase family. ValS type 1 subfamily. Monomer.

It is found in the cytoplasm. The catalysed reaction is tRNA(Val) + L-valine + ATP = L-valyl-tRNA(Val) + AMP + diphosphate. In terms of biological role, catalyzes the attachment of valine to tRNA(Val). As ValRS can inadvertently accommodate and process structurally similar amino acids such as threonine, to avoid such errors, it has a 'posttransfer' editing activity that hydrolyzes mischarged Thr-tRNA(Val) in a tRNA-dependent manner. This Prochlorococcus marinus (strain MIT 9313) protein is Valine--tRNA ligase.